A 511-amino-acid chain; its full sequence is Arabinose import ATP-binding protein AraG (511 aa).

2 ABC transporter domains span residues L5 to R240 and R240 to R501. G37–S44 contacts ATP.

Belongs to the ABC transporter superfamily. Arabinose importer (TC 3.A.1.2.2) family. As to quaternary structure, the complex is composed of two ATP-binding proteins (AraG), two transmembrane proteins (AraH) and a solute-binding protein (AraF).

It is found in the cell inner membrane. It catalyses the reaction L-arabinose(out) + ATP + H2O = L-arabinose(in) + ADP + phosphate + H(+). Part of the ABC transporter complex AraFGH involved in arabinose import. Responsible for energy coupling to the transport system. The polypeptide is Arabinose import ATP-binding protein AraG (Ralstonia nicotianae (strain ATCC BAA-1114 / GMI1000) (Ralstonia solanacearum)).